Here is a 351-residue protein sequence, read N- to C-terminus: MAEASTCNMEVSCTQPESSVKPNAEDMTSKDYYFDSYAHFGIHEEMLKDEVRTLTYRNSMFHNRHLFKDKVVLDVGSGTGILCMFAAKAGAKKVIGIECSSISDYAIKIVKANKLDHVVTIIKGKVEEVELPVEKVDIIISEWMGYCLFYESMLNTVIYARDKWLTPDGLIFPDRATLYVTAIEDRQYKDYKIHWWENVYGFDMSCIKDVAIKEPLVDVVDPKQLVTNACLIKEVDIYTVKVDDLTFTSPFCLQVKRNDYIHALVAYFNIEFTRCHKRTGFSTSPESPYTHWKQTVFYMEDYLTVKTGEEIFGTISMKPNAKNNRDLDFTVDIDFKGQLCELSCSTDYRMR.

In terms of domain architecture, SAM-dependent MTase PRMT-type spans 30-331 (KDYYFDSYAH…KNNRDLDFTV (302 aa)). Residues His43, Arg52, Gly76, Glu98, and Glu127 each contribute to the S-adenosyl-L-methionine site. Active-site residues include Glu142 and Glu151.

It belongs to the class I-like SAM-binding methyltransferase superfamily. Protein arginine N-methyltransferase family. As to quaternary structure, homodimer. Homooctamer; individual homodimers associates to form a homooctamer and homooligomerization is required for proper localization to the cell membrane. Individual homodimers can associate to form a homohexamer. Component of a complex with lsm14a/rap55a. Interacts with cirbp.

The protein resides in the nucleus. The protein localises to the nucleoplasm. It localises to the cytoplasm. It is found in the cytosol. It catalyses the reaction L-arginyl-[protein] + 2 S-adenosyl-L-methionine = N(omega),N(omega)-dimethyl-L-arginyl-[protein] + 2 S-adenosyl-L-homocysteine + 2 H(+). It carries out the reaction L-arginyl-[protein] + S-adenosyl-L-methionine = N(omega)-methyl-L-arginyl-[protein] + S-adenosyl-L-homocysteine + H(+). The enzyme catalyses N(omega)-methyl-L-arginyl-[protein] + S-adenosyl-L-methionine = N(omega),N(omega)-dimethyl-L-arginyl-[protein] + S-adenosyl-L-homocysteine + H(+). Arginine methyltransferase that methylates (mono and asymmetric dimethylation) the guanidino nitrogens of arginyl residues present in target proteins. Constitutes the main enzyme that mediates monomethylation and asymmetric dimethylation of histone H4 'Arg-3' (H4R3me1 and H4R3me2a, respectively), a specific tag for epigenetic transcriptional activation. Methylates ilf3 to regulate its DNA-binding activity. Required for neural induction, playing a key role in the control of epidermal versus neural cell fate choice. Methylates cirbp to regulate its subcellular location. Acts transiently during metamorphosis as a transcription coactivator, enhancing thyroid hormone (T3) receptor (TR)-mediated transcription by enhancing TR binding to the T3 response element (TRE), and histone modification through recruitment of other coactivators. The chain is Protein arginine N-methyltransferase 1 from Xenopus tropicalis (Western clawed frog).